Here is a 319-residue protein sequence, read N- to C-terminus: Pantothenate kinase (319 aa).

97-104 (GSVAVGKS) is a binding site for ATP.

It belongs to the prokaryotic pantothenate kinase family.

The protein resides in the cytoplasm. It carries out the reaction (R)-pantothenate + ATP = (R)-4'-phosphopantothenate + ADP + H(+). Its pathway is cofactor biosynthesis; coenzyme A biosynthesis; CoA from (R)-pantothenate: step 1/5. The protein is Pantothenate kinase of Mesorhizobium japonicum (strain LMG 29417 / CECT 9101 / MAFF 303099) (Mesorhizobium loti (strain MAFF 303099)).